The following is a 548-amino-acid chain: Chaperonin GroEL (548 aa).

Residues 29–32 (TLGP), K50, 86–90 (DGTTT), G414, 478–480 (NAA), and D494 contribute to the ATP site.

It belongs to the chaperonin (HSP60) family. As to quaternary structure, forms a cylinder of 14 subunits composed of two heptameric rings stacked back-to-back. Interacts with the co-chaperonin GroES.

It localises to the cytoplasm. It catalyses the reaction ATP + H2O + a folded polypeptide = ADP + phosphate + an unfolded polypeptide.. In terms of biological role, together with its co-chaperonin GroES, plays an essential role in assisting protein folding. The GroEL-GroES system forms a nano-cage that allows encapsulation of the non-native substrate proteins and provides a physical environment optimized to promote and accelerate protein folding. The polypeptide is Chaperonin GroEL (Psychrobacter sp. (strain PRwf-1)).